A 344-amino-acid polypeptide reads, in one-letter code: Ribosomal RNA large subunit methyltransferase Cfr (344 aa).

The active-site Proton acceptor is Glu90. Positions 97–330 constitute a Radical SAM core domain; that stretch reads KQGWESFCIS…ATVRTQFGSE (234 aa). Cys104 and Cys335 are disulfide-bonded. [4Fe-4S] cluster contacts are provided by Cys111, Cys115, and Cys118. S-adenosyl-L-methionine contacts are provided by residues 157–158, Ser188, 211–213, and Asn292; these read GE and SLH. Cys335 acts as the S-methylcysteine intermediate in catalysis.

It belongs to the radical SAM superfamily. RlmN family. Cfr subfamily. It depends on [4Fe-4S] cluster as a cofactor.

The protein localises to the cytoplasm. The catalysed reaction is adenosine(2503) in 23S rRNA + 2 reduced [2Fe-2S]-[ferredoxin] + 2 S-adenosyl-L-methionine = 8-methyladenosine(2503) in 23S rRNA + 5'-deoxyadenosine + L-methionine + 2 oxidized [2Fe-2S]-[ferredoxin] + S-adenosyl-L-homocysteine. Its function is as follows. Specifically methylates position 8 of adenine 2503 in 23S rRNA. Confers resistance to some classes of antibiotics. The polypeptide is Ribosomal RNA large subunit methyltransferase Cfr (Clostridium botulinum (strain Okra / Type B1)).